Reading from the N-terminus, the 193-residue chain is Lipopolysaccharide core heptose(II)-phosphate phosphatase (193 aa).

An N-terminal signal peptide occupies residues 1–25 (MKLKKHVAVLLISFLCLIGLVTQHA).

This sequence belongs to the phosphoglycerate mutase family. Ais subfamily.

Its subcellular location is the periplasm. Its pathway is bacterial outer membrane biogenesis; lipopolysaccharide metabolism. Functionally, catalyzes the dephosphorylation of heptose(II) of the outer membrane lipopolysaccharide core. In Escherichia fergusonii (strain ATCC 35469 / DSM 13698 / CCUG 18766 / IAM 14443 / JCM 21226 / LMG 7866 / NBRC 102419 / NCTC 12128 / CDC 0568-73), this protein is Lipopolysaccharide core heptose(II)-phosphate phosphatase.